The primary structure comprises 542 residues: Malolactic enzyme (542 aa).

The active-site Proton donor is the tyrosine 92. The active-site Proton acceptor is lysine 165. Lysine 165 provides a ligand contact to substrate. Residues glutamate 236, aspartate 237, and aspartate 260 each contribute to the Mn(2+) site. NAD(+)-binding positions include 293–296, asparagine 405, and asparagine 450; that span reads AGTA. Asparagine 450 is a binding site for substrate.

It belongs to the malic enzymes family. As to quaternary structure, homodimer. Mn(2+) is required as a cofactor. It depends on NAD(+) as a cofactor.

The enzyme catalyses (S)-malate + H(+) = (S)-lactate + CO2. Oxamate, fructose-1,6-diphosphate and L-lactate act as non-competitive inhibitors, whereas succinate, citrate and tartrate isomers produce a competitive inhibition. Its function is as follows. Involved in the malolactic fermentation (MLF) of wine, which results in a natural decrease in acidity and favorable changes in wine flavors. Catalyzes the decarboxylation of L-malate to L-lactate. The protein is Malolactic enzyme (mleS) of Leuconostoc mesenteroides.